Consider the following 546-residue polypeptide: Cytochrome P450 monooxygenase gloP (546 aa).

A helical membrane pass occupies residues 17–37; the sequence is TLSGGILTFLFIVVIAHFVLT. Asn-189, Asn-413, and Asn-416 each carry an N-linked (GlcNAc...) asparagine glycan. Heme is bound at residue Cys-492.

Belongs to the cytochrome P450 family. Heme is required as a cofactor.

The protein resides in the membrane. It participates in mycotoxin biosynthesis. Its function is as follows. Cytochrome P450 monooxygenase; part of the gene cluster that mediates the biosynthesis of pneumocandins, lipohexapeptides of the echinocandin family that prevent fungal cell wall formation by non-competitive inhibition of beta-1,3-glucan synthase. The 10,12-dimethylmyristoyl side chain is synthesized by the reducing polyketide synthase gloL/GLPKS4. The thioesterase gloN/GLHYD exclusively interacts with gloL/GLPKS4 to maintain turnover of the polyketide side chain. The 10R,12S-dimethylmyristic acid is then transferred to the first thiolation domain of the nonribosomal peptide synthetase gloA/GLNRPS4 by the acyl-AMP ligase gloD/GLligase, followed by its acylation to L-ornithine to trigger elongation of the cyclic hexapeptide. L-ornithine, 4R-hydroxyl-L-proline (generated from L-proline by the dioxygenase gloF/GLOXY2), 3S-hydroxyl-L-homotyrosine (generated by gloG/GLHtyB, gloH/GLHtyA, gloI/GLHtyC, gloJ/GLHtyD and hydroxylated at C-3 by the dioxygenase gloM/GLOXY1), 3R-hydroxyl-L-glutamine (generated from L-glutamine probably by the dioxygenase gloE/GLOXY3) and 3S-hydroxyl-L-proline (generated from L-proline by the dioxygenase gloF/GLOXY2 to yield pneumocandin B0), or 3S-hydroxyl-4S-methyl-L-proline (generated from L-leucine by the dioxygenase gloC/GLOXY4 to yield pneumocandin A0) are sequentially added to the growing chain. The last C domain of gloA/GLNRPS4 is proposed to be responsible for cyclization by condensation to form the peptide bond between L-ornithine and 3S-hydroxyl-4S-methyl-L-proline (for pneumocandin A0) or 3S-hydroxyl-L-proline (for pneumocandin B0). Finally, the subsequent C-4 hydroxylation of 3S-hydroxyl-L-homotyrosine and L-ornithine dihydroxylation at C-4 and C-5 are performed by the cytochrome P450 monooxygenases gloP/GLP450-1 and gloO/GLP450-2, respectively. The chain is Cytochrome P450 monooxygenase gloP from Glarea lozoyensis (strain ATCC 20868 / MF5171).